The primary structure comprises 101 residues: Small ribosomal subunit protein uS14 (101 aa).

This sequence belongs to the universal ribosomal protein uS14 family. Part of the 30S ribosomal subunit. Contacts proteins S3 and S10.

Functionally, binds 16S rRNA, required for the assembly of 30S particles and may also be responsible for determining the conformation of the 16S rRNA at the A site. In Caulobacter vibrioides (strain ATCC 19089 / CIP 103742 / CB 15) (Caulobacter crescentus), this protein is Small ribosomal subunit protein uS14.